The following is a 238-amino-acid chain: Ribosomal RNA small subunit methyltransferase G (238 aa).

S-adenosyl-L-methionine-binding positions include G77, F82, 128–129, and R147; that span reads AE.

This sequence belongs to the methyltransferase superfamily. RNA methyltransferase RsmG family.

The protein resides in the cytoplasm. In terms of biological role, specifically methylates the N7 position of guanine in position 535 of 16S rRNA. This is Ribosomal RNA small subunit methyltransferase G from Lysinibacillus sphaericus (strain C3-41).